A 500-amino-acid polypeptide reads, in one-letter code: Lysine--tRNA ligase (500 aa).

Residues glutamate 410 and glutamate 417 each coordinate Mg(2+).

It belongs to the class-II aminoacyl-tRNA synthetase family. Homodimer. Mg(2+) is required as a cofactor.

It is found in the cytoplasm. The enzyme catalyses tRNA(Lys) + L-lysine + ATP = L-lysyl-tRNA(Lys) + AMP + diphosphate. The sequence is that of Lysine--tRNA ligase from Pseudomonas entomophila (strain L48).